The following is a 492-amino-acid chain: Glutamyl-tRNA(Gln) amidotransferase subunit A (492 aa).

Active-site charge relay system residues include Lys-78 and Ser-158. The active-site Acyl-ester intermediate is the Ser-182.

This sequence belongs to the amidase family. GatA subfamily. In terms of assembly, heterotrimer of A, B and C subunits.

The catalysed reaction is L-glutamyl-tRNA(Gln) + L-glutamine + ATP + H2O = L-glutaminyl-tRNA(Gln) + L-glutamate + ADP + phosphate + H(+). In terms of biological role, allows the formation of correctly charged Gln-tRNA(Gln) through the transamidation of misacylated Glu-tRNA(Gln) in organisms which lack glutaminyl-tRNA synthetase. The reaction takes place in the presence of glutamine and ATP through an activated gamma-phospho-Glu-tRNA(Gln). The sequence is that of Glutamyl-tRNA(Gln) amidotransferase subunit A from Zymomonas mobilis subsp. mobilis (strain ATCC 31821 / ZM4 / CP4).